The primary structure comprises 310 residues: B3 domain-containing transcription factor NGA1 (310 aa).

The disordered stretch occupies residues 1 to 26 (MMTDLSLTRDEDEEEAKPLAEEEGAR). Over residues 16–26 (AKPLAEEEGAR) the composition is skewed to basic and acidic residues. Residues 35–141 (FDKVVTPSDV…RLFIDWRRRP (107 aa)) constitute a DNA-binding region (TF-B3). Residues 251–268 (ESGMTNSTEEESSSSGGS) show a composition bias toward low complexity. The interval 251–310 (ESGMTNSTEEESSSSGGSLPRGGGGGASSSSFFQLRLGSSSEDDHFTKKGKSSLSFDLDQ) is disordered.

Interacts with BRX. Interacts with BZIP30.

It is found in the nucleus. Its function is as follows. Regulates lateral organ growth. Functionally redundant with NGA2, NGA3 and NGA4. The polypeptide is B3 domain-containing transcription factor NGA1 (NGA1) (Arabidopsis thaliana (Mouse-ear cress)).